The following is a 521-amino-acid chain: Glutamate--cysteine ligase (521 aa).

This sequence belongs to the glutamate--cysteine ligase type 1 family. Type 1 subfamily.

It catalyses the reaction L-cysteine + L-glutamate + ATP = gamma-L-glutamyl-L-cysteine + ADP + phosphate + H(+). It functions in the pathway sulfur metabolism; glutathione biosynthesis; glutathione from L-cysteine and L-glutamate: step 1/2. The protein is Glutamate--cysteine ligase (gshA) of Buchnera aphidicola subsp. Baizongia pistaciae (strain Bp).